The sequence spans 794 residues: Signal transducer and activator of transcription 5A (794 aa).

Phosphotyrosine is present on Tyr90. Ser129 carries the phosphoserine modification. The SH2 domain occupies Trp589 to Val686. Phosphotyrosine is present on Tyr682. Tyr694 is modified (phosphotyrosine; by JAK2). The tract at residues Glu765–Ser794 is disordered.

Belongs to the transcription factor STAT family. As to quaternary structure, forms a homodimer or a heterodimer with a related family member. Binds NR3C1. Interacts with NCOA1 and SOCS7. Interacts with ERBB4. Interacts with EBF4. Interacts with CD69. ISGylated. Post-translationally, tyrosine phosphorylated in response to KITLG/SCF, IL2, IL3, IL7, IL15, CSF2/GMCSF, GH1, PRL, EPO and THPO. Activated KIT promotes phosphorylation on tyrosine residues and subsequent translocation to the nucleus. Tyrosine phosphorylated in response to constitutively activated FGFR1, FGFR2, FGFR3 and FGFR4. Tyrosine phosphorylation is required for DNA-binding activity and dimerization. Serine phosphorylation is also required for maximal transcriptional activity. Tyrosine phosphorylated in response to signaling via activated FLT3; wild-type FLT3 results in much weaker phosphorylation than constitutively activated mutant FLT3. Alternatively, can be phosphorylated by JAK2 at Tyr-694. Found in mammary gland and, in lesser extent, in ovary, thymus, spleen, kidney, lung, muscle and adrenal gland.

Its subcellular location is the cytoplasm. The protein localises to the nucleus. In terms of biological role, carries out a dual function: signal transduction and activation of transcription. Mediates cellular responses to the cytokine KITLG/SCF and other growth factors. May mediate cellular responses to activated FGFR1, FGFR2, FGFR3 and FGFR4. Binds to the GAS element and activates PRL-induced transcription. Regulates the expression of milk proteins during lactation. In Ovis aries (Sheep), this protein is Signal transducer and activator of transcription 5A (STAT5A).